A 325-amino-acid chain; its full sequence is Apoptosis-enhancing nuclease (325 aa).

A Nucleolar localization signal motif is present at residues 27 to 35; that stretch reads RKRHKRRSR. The segment at 53 to 105 is disordered; sequence LSMPPEPGSSPLPTPFGAVTATEDASSGKQCPRAGSGGAPCSRRPAPGKASGP. Pro residues predominate over residues 56–66; it reads PPEPGSSPLPT. One can recognise an Exonuclease domain in the interval 110–266; the sequence is CVAIDCEMVG…EDATTAMELY (157 aa). The Nuclear localization signal motif lies at 165–188; that stretch reads RQHMCKAIPFQVAQKEILKLLKGK. The interval 281–325 is disordered; sequence LWTCPEDREPDSSTDMEQYMEDQYWPDDLAHGSRGGAREAQDRRN. The span at 308-325 shows a compositional bias: basic and acidic residues; that stretch reads DLAHGSRGGAREAQDRRN.

Its subcellular location is the nucleus. The protein resides in the nucleolus. Its function is as follows. Exonuclease with activity against single- and double-stranded DNA and RNA. Mediates p53-induced apoptosis. When induced by p53 following DNA damage, digests double-stranded DNA to form single-stranded DNA and amplifies DNA damage signals, leading to enhancement of apoptosis. In Pongo abelii (Sumatran orangutan), this protein is Apoptosis-enhancing nuclease (AEN).